Consider the following 242-residue polypeptide: 4-hydroxy-tetrahydrodipicolinate reductase (242 aa).

NAD(+) is bound by residues 79 to 81 (ATT) and 103 to 106 (SANM). Residue His-135 is the Proton donor/acceptor of the active site. His-136 contacts (S)-2,3,4,5-tetrahydrodipicolinate. Lys-139 serves as the catalytic Proton donor. A (S)-2,3,4,5-tetrahydrodipicolinate-binding site is contributed by 145–146 (GT).

Belongs to the DapB family.

It localises to the cytoplasm. The enzyme catalyses (S)-2,3,4,5-tetrahydrodipicolinate + NAD(+) + H2O = (2S,4S)-4-hydroxy-2,3,4,5-tetrahydrodipicolinate + NADH + H(+). It carries out the reaction (S)-2,3,4,5-tetrahydrodipicolinate + NADP(+) + H2O = (2S,4S)-4-hydroxy-2,3,4,5-tetrahydrodipicolinate + NADPH + H(+). Its pathway is amino-acid biosynthesis; L-lysine biosynthesis via DAP pathway; (S)-tetrahydrodipicolinate from L-aspartate: step 4/4. Catalyzes the conversion of 4-hydroxy-tetrahydrodipicolinate (HTPA) to tetrahydrodipicolinate. This is 4-hydroxy-tetrahydrodipicolinate reductase from Staphylococcus carnosus (strain TM300).